The sequence spans 1279 residues: Amylopullulanase (1279 aa).

The first 35 residues, 1 to 35, serve as a signal peptide directing secretion; that stretch reads MYKKLFTKKFISFVMSLLLVLTAAFSSMPFHNVYA. Positions 248, 250, 288, 343, 401, 403, 406, 407, 452, and 454 each coordinate Ca(2+). 2 residues coordinate substrate: His527 and Arg627. Asp629 acts as the Nucleophile in catalysis. Catalysis depends on Glu658, which acts as the Proton donor. Substrate contacts are provided by residues 734 to 735, Asp794, and Arg798; that span reads HD. 2 Fibronectin type-III domains span residues 930 to 1022 and 1158 to 1252; these read APQV…AYPI and KPTA…VVPI.

This sequence belongs to the glycosyl hydrolase 13 family. Ca(2+) is required as a cofactor.

The enzyme catalyses Endohydrolysis of (1-&gt;4)-alpha-D-glucosidic linkages in polysaccharides containing three or more (1-&gt;4)-alpha-linked D-glucose units.. It catalyses the reaction Hydrolysis of (1-&gt;6)-alpha-D-glucosidic linkages in pullulan, amylopectin and glycogen, and in the alpha- and beta-limit dextrins of amylopectin and glycogen.. In Thermoanaerobacterium saccharolyticum, this protein is Amylopullulanase (apu).